We begin with the raw amino-acid sequence, 548 residues long: Asparagine--tRNA ligase, cytoplasmic (548 aa).

The disordered stretch occupies residues 1–25 (MVLAELYVSDREGSDATGDGTKEKP). Basic and acidic residues predominate over residues 8 to 25 (VSDREGSDATGDGTKEKP). The residue at position 61 (S61) is a Phosphoserine. The segment at 69–91 (MWHREQMKSESREKKEAEDSLRR) is disordered. Residues 71-91 (HREQMKSESREKKEAEDSLRR) are compositionally biased toward basic and acidic residues. The residue at position 244 (K244) is an N6-acetyllysine. The residue at position 482 (S482) is a Phosphoserine. The residue at position 490 (K490) is an N6-acetyllysine.

This sequence belongs to the class-II aminoacyl-tRNA synthetase family. Homodimer.

It localises to the cytoplasm. It carries out the reaction tRNA(Asn) + L-asparagine + ATP = L-asparaginyl-tRNA(Asn) + AMP + diphosphate + H(+). Catalyzes the attachment of asparagine to tRNA(Asn) in a two-step reaction: asparagine is first activated by ATP to form Asn-AMP and then transferred to the acceptor end of tRNA(Asn). In addition to its essential role in protein synthesis, acts as a signaling molecule that induced migration of CCR3-expressing cells. Has an essential role in the development of the cerebral cortex, being required for proper proliferation of radial glial cells. The polypeptide is Asparagine--tRNA ligase, cytoplasmic (Homo sapiens (Human)).